Reading from the N-terminus, the 367-residue chain is Phospho-N-acetylmuramoyl-pentapeptide-transferase (367 aa).

10 helical membrane passes run 28 to 48, 75 to 95, 96 to 116, 134 to 154, 175 to 195, 206 to 226, 243 to 263, 271 to 291, 295 to 315, and 344 to 364; these read GALM…IGWL, TMGG…WADL, TNAY…IGFI, FKLV…THTA, LMIN…VGSG, GLAI…AYVV, AGEI…FLWW, FMGD…AVAI, LVLA…MVQV, and TIVI…LATL.

It belongs to the glycosyltransferase 4 family. MraY subfamily. Mg(2+) serves as cofactor.

It localises to the cell inner membrane. It catalyses the reaction UDP-N-acetyl-alpha-D-muramoyl-L-alanyl-gamma-D-glutamyl-meso-2,6-diaminopimeloyl-D-alanyl-D-alanine + di-trans,octa-cis-undecaprenyl phosphate = di-trans,octa-cis-undecaprenyl diphospho-N-acetyl-alpha-D-muramoyl-L-alanyl-D-glutamyl-meso-2,6-diaminopimeloyl-D-alanyl-D-alanine + UMP. Its pathway is cell wall biogenesis; peptidoglycan biosynthesis. Catalyzes the initial step of the lipid cycle reactions in the biosynthesis of the cell wall peptidoglycan: transfers peptidoglycan precursor phospho-MurNAc-pentapeptide from UDP-MurNAc-pentapeptide onto the lipid carrier undecaprenyl phosphate, yielding undecaprenyl-pyrophosphoryl-MurNAc-pentapeptide, known as lipid I. The sequence is that of Phospho-N-acetylmuramoyl-pentapeptide-transferase from Maricaulis maris (strain MCS10) (Caulobacter maris).